A 142-amino-acid chain; its full sequence is Putative pterin-4-alpha-carbinolamine dehydratase (142 aa).

The protein belongs to the pterin-4-alpha-carbinolamine dehydratase family.

The enzyme catalyses (4aS,6R)-4a-hydroxy-L-erythro-5,6,7,8-tetrahydrobiopterin = (6R)-L-erythro-6,7-dihydrobiopterin + H2O. The sequence is that of Putative pterin-4-alpha-carbinolamine dehydratase (pcbd-1) from Caenorhabditis elegans.